The following is a 713-amino-acid chain: RNA-binding protein vts1 (713 aa).

Low complexity predominate over residues 154–188 (NSGLSLDKSLPSSPKGDSPSLSSSLPSLTTKSNLS). Disordered stretches follow at residues 154–208 (NSGL…SSKH), 254–336 (EPPA…RDRG), 356–389 (DESS…SRPL), 554–596 (EKIE…GNEL), and 667–713 (KAAK…SSMD). 2 stretches are compositionally biased toward polar residues: residues 189 to 208 (GNLN…SSKH) and 258 to 281 (SSAS…NANV). Composition is skewed to low complexity over residues 282–297 (TSSL…SKTT) and 304–320 (SKKS…PNTS). The span at 321-330 (FFETPHNNIW) shows a compositional bias: polar residues. Positions 369–378 (SPPPPPPPPE) are enriched in pro residues. The span at 559–569 (PPNNSKNQTYR) shows a compositional bias: polar residues. The segment covering 570-583 (RSSRGSNKTRKSIS) has biased composition (basic residues). The 62-residue stretch at 595–656 (ELPQDIPSWL…LKSFQEVAPL (62 aa)) folds into the SAM domain. Residues 670 to 681 (KNQSSESLTSFK) are compositionally biased toward polar residues. A Phosphoserine modification is found at Ser673. Over residues 691–702 (SGSMSNEISSNS) the composition is skewed to low complexity. The span at 703–713 (TKQDVSSSSMD) shows a compositional bias: polar residues.

This sequence belongs to the VTS1 family. In terms of assembly, monomer. Binds to RNA.

It localises to the cytoplasm. The protein localises to the cytosol. The protein resides in the P-body. In terms of biological role, RNA-binding protein involved in post-transcriptional regulation through transcript degradation. The chain is RNA-binding protein vts1 from Schizosaccharomyces pombe (strain 972 / ATCC 24843) (Fission yeast).